The primary structure comprises 360 residues: Homeobox-leucine zipper protein HOX21 (360 aa).

2 disordered regions span residues 25–75 (QQAA…SSAQ) and 88–126 (MLGK…EKKR). Over residues 36–55 (HHHHHHHGHHHEQQQHHHHL) the composition is skewed to basic residues. A compositionally biased stretch (pro residues) spans 56-68 (GPPPPPPPHPHNP). Over residues 97–109 (GDGGGGGDEVNGG) the composition is skewed to gly residues. The homeobox DNA-binding region spans 121 to 180 (AGEKKRRLNVEQVRTLEKNFELGNKLEPERKMQLARALGLQPRQVAIWFQNRRARWKTKQ). The tract at residues 179-223 (KQLEKDYDALKRQLDAVKAENDALLNHNKKLQAEIVALKGREAAS) is leucine-zipper. 2 disordered regions span residues 233–278 (EASC…GGGG) and 299–328 (GVDI…GNVQ). Over residues 234–246 (ASCSNRSENSSEI) the composition is skewed to polar residues.

It belongs to the HD-ZIP homeobox family. Class I subfamily. As to expression, expressed in seedlings, roots, stems, leaf blades and panicles.

Its subcellular location is the nucleus. Functionally, probable transcription factor. This Oryza sativa subsp. indica (Rice) protein is Homeobox-leucine zipper protein HOX21 (HOX21).